The primary structure comprises 96 residues: Small ribosomal subunit protein bS6 (96 aa).

This sequence belongs to the bacterial ribosomal protein bS6 family.

Functionally, binds together with bS18 to 16S ribosomal RNA. The polypeptide is Small ribosomal subunit protein bS6 (Streptococcus pyogenes serotype M1).